Consider the following 603-residue polypeptide: Pyruvate decarboxylase 4 (603 aa).

Positions 65 and 152 each coordinate substrate. Positions 430 to 512 (DSWFNCQKLK…FLINNGGYTI (83 aa)) are thiamine pyrophosphate binding. 3 residues coordinate Mg(2+): Asp-480, Asn-507, and Gly-509. Glu-513 contacts substrate.

This sequence belongs to the TPP enzyme family. Homotetramer. It depends on a metal cation as a cofactor. Thiamine diphosphate is required as a cofactor. As to expression, expressed in shoots and at lowe levels in roots, flowers and siliques.

The catalysed reaction is a 2-oxocarboxylate + H(+) = an aldehyde + CO2. The sequence is that of Pyruvate decarboxylase 4 (PDC4) from Arabidopsis thaliana (Mouse-ear cress).